The primary structure comprises 464 residues: ATP synthase subunit beta (464 aa).

148–155 (GGAGVGKT) lines the ATP pocket.

It belongs to the ATPase alpha/beta chains family. In terms of assembly, F-type ATPases have 2 components, CF(1) - the catalytic core - and CF(0) - the membrane proton channel. CF(1) has five subunits: alpha(3), beta(3), gamma(1), delta(1), epsilon(1). CF(0) has three main subunits: a(1), b(2) and c(9-12). The alpha and beta chains form an alternating ring which encloses part of the gamma chain. CF(1) is attached to CF(0) by a central stalk formed by the gamma and epsilon chains, while a peripheral stalk is formed by the delta and b chains.

Its subcellular location is the cell inner membrane. The enzyme catalyses ATP + H2O + 4 H(+)(in) = ADP + phosphate + 5 H(+)(out). In terms of biological role, produces ATP from ADP in the presence of a proton gradient across the membrane. The catalytic sites are hosted primarily by the beta subunits. In Marinobacter nauticus (strain ATCC 700491 / DSM 11845 / VT8) (Marinobacter aquaeolei), this protein is ATP synthase subunit beta.